We begin with the raw amino-acid sequence, 377 residues long: Chaperone protein DnaJ (377 aa).

In terms of domain architecture, J spans Asp5 to Gly70. A CR-type zinc finger spans residues Gly132–Thr210. Zn(2+) is bound by residues Cys145, Cys148, Cys162, Cys165, Cys184, Cys187, Cys198, and Cys201. CXXCXGXG motif repeat units lie at residues Cys145–Gly152, Cys162–Gly169, Cys184–Gly191, and Cys198–Gly205.

The protein belongs to the DnaJ family. As to quaternary structure, homodimer. Requires Zn(2+) as cofactor.

Its subcellular location is the cytoplasm. Its function is as follows. Participates actively in the response to hyperosmotic and heat shock by preventing the aggregation of stress-denatured proteins and by disaggregating proteins, also in an autonomous, DnaK-independent fashion. Unfolded proteins bind initially to DnaJ; upon interaction with the DnaJ-bound protein, DnaK hydrolyzes its bound ATP, resulting in the formation of a stable complex. GrpE releases ADP from DnaK; ATP binding to DnaK triggers the release of the substrate protein, thus completing the reaction cycle. Several rounds of ATP-dependent interactions between DnaJ, DnaK and GrpE are required for fully efficient folding. Also involved, together with DnaK and GrpE, in the DNA replication of plasmids through activation of initiation proteins. This chain is Chaperone protein DnaJ, found in Klebsiella pneumoniae subsp. pneumoniae (strain ATCC 700721 / MGH 78578).